Reading from the N-terminus, the 116-residue chain is L-amino-acid oxidase BjussuLAAO-II (116 aa).

Position 42-45 (42-45 (GPMR)) interacts with FAD. 2 residues coordinate substrate: R45 and H78.

The protein belongs to the flavin monoamine oxidase family. FIG1 subfamily. In terms of assembly, homodimer; non-covalently linked. Requires FAD as cofactor. In terms of processing, glycosylated. As to expression, expressed by the venom gland.

Its subcellular location is the secreted. It carries out the reaction an L-alpha-amino acid + O2 + H2O = a 2-oxocarboxylate + H2O2 + NH4(+). The catalysed reaction is L-leucine + O2 + H2O = 4-methyl-2-oxopentanoate + H2O2 + NH4(+). The enzyme catalyses L-phenylalanine + O2 + H2O = 3-phenylpyruvate + H2O2 + NH4(+). It catalyses the reaction L-methionine + O2 + H2O = 4-methylsulfanyl-2-oxobutanoate + H2O2 + NH4(+). It carries out the reaction L-isoleucine + O2 + H2O = (S)-3-methyl-2-oxopentanoate + H2O2 + NH4(+). The catalysed reaction is L-histidine + O2 + H2O = 3-(imidazol-5-yl)pyruvate + H2O2 + NH4(+). The enzyme catalyses L-tyrosine + O2 + H2O = 3-(4-hydroxyphenyl)pyruvate + H2O2 + NH4(+). It catalyses the reaction L-tryptophan + O2 + H2O = indole-3-pyruvate + H2O2 + NH4(+). Its enzymatic activities is reduced by the presence of Zn(2+), Al(3+), Cu(2+), Na(+) or Ni(2+) salts. In terms of biological role, catalyzes an oxidative deamination of predominantly hydrophobic and aromatic L-amino acids, thus producing hydrogen peroxide that may contribute to the diverse toxic effects of this enzyme. Shows very high enzymatic activity on L-Met and L-Leu, high activity on L-Ile, L-Phe and L-Tyr and moderate activity on L-His. Exhibits diverse biological activities, such as hemorrhage, hemolysis, edema, apoptosis of vascular endothelial cells or tumor cell lines, and antibacterial, as well as regulation of platelet aggregation. Effects of snake L-amino oxidases on platelets are controversial, since they either induce aggregation or inhibit agonist-induced aggregation. These different effects are probably due to different experimental conditions. In vitro, has a strong antiprotozoal effect against Leishmania amazonensis (IC(50)=4.56 ug/mL) and Trypanosoma cruzi (IC(50)=4.85 ug/mL). It also causes cell death and DNA damage in hepatocarcinoma cells (HepG2) in vitro by inducing oxidative stress. It exerts cytotoxicity towards colorectal adenocarcinomahuman cells (Caco-2) by acting on multiple intracellular targets. It diminishes cell viability by decreasing mitochondrial activity, the activity of acid phosphatases, and lysosomal function. In addition, it increases intracellular levels of reactive oxygen species and DNA damage, it elevates the expression of the pro-inflammatory cytokine genes TNF and IL6, and lowers the expression of the apoptotic-related genes. Also induces cytotoxicity (IC(50)=1.80 ug/mL) and apoptosis in MCF-7 cells (a human breast adeno-carcinoma cell line) by activating the intrinsic and extrinsic apoptosis pathways, but are not cytotoxic towards MCF-10A cells (a non-tumorigenic human breast epithelial cell line). In Bothrops jararacussu (Jararacussu), this protein is L-amino-acid oxidase BjussuLAAO-II.